The sequence spans 722 residues: WD repeat-containing and planar cell polarity effector protein fritz homolog (722 aa).

WD repeat units lie at residues 305 to 343 and 344 to 383; these read LRSKAISCCRNSTEDKLIVGCEDSSVILYEAHRGVTLLA and QAELRPSLISCHPSGAILLVGSNQGELQIFDIALSPINIQ. Residues 655-710 are disordered; the sequence is IPNGPSSRWAIERRTEEEEEEEEEEEEELCTDSSGATTWNAEGELKEDQRKQDIGD. Acidic residues predominate over residues 671–684; it reads EEEEEEEEEEEELC. Residues 685–694 are compositionally biased toward polar residues; it reads TDSSGATTWN. Residues 697-708 show a composition bias toward basic and acidic residues; it reads GELKEDQRKQDI.

It belongs to the WD repeat fritz family. As to quaternary structure, component of the CPLANE (ciliogenesis and planar polarity effectors) complex, composed of INTU, FUZ and WDPCP. Interacts with CPLANE1.

The protein resides in the cell membrane. It is found in the cytoplasm. The protein localises to the cytoskeleton. It localises to the cilium axoneme. Its subcellular location is the cilium basal body. In terms of biological role, probable effector of the planar cell polarity signaling pathway which regulates the septin cytoskeleton in both ciliogenesis and collective cell movements. Together with FUZ and WDPCP proposed to function as core component of the CPLANE (ciliogenesis and planar polarity effectors) complex involved in the recruitment of peripheral IFT-A proteins to basal bodies. Binds phosphatidylinositol 3-phosphate with highest affinity, followed by phosphatidylinositol 4-phosphate and phosphatidylinositol 5-phosphate. The sequence is that of WD repeat-containing and planar cell polarity effector protein fritz homolog (Wdpcp) from Mus musculus (Mouse).